A 476-amino-acid chain; its full sequence is Glycogen synthase (476 aa).

Lys15 provides a ligand contact to ADP-alpha-D-glucose.

The protein belongs to the glycosyltransferase 1 family. Bacterial/plant glycogen synthase subfamily.

The catalysed reaction is [(1-&gt;4)-alpha-D-glucosyl](n) + ADP-alpha-D-glucose = [(1-&gt;4)-alpha-D-glucosyl](n+1) + ADP + H(+). The protein operates within glycan biosynthesis; glycogen biosynthesis. Functionally, synthesizes alpha-1,4-glucan chains using ADP-glucose. This is Glycogen synthase from Bacillus cereus (strain Q1).